The chain runs to 329 residues: Biotin synthase (329 aa).

A Radical SAM core domain is found at 38-262 (NTIQVSTLLS…IMPHSYIRLS (225 aa)). Positions 53, 57, and 60 each coordinate [4Fe-4S] cluster. [2Fe-2S] cluster contacts are provided by Cys-97, Cys-128, Cys-188, and Arg-260.

This sequence belongs to the radical SAM superfamily. Biotin synthase family. In terms of assembly, homodimer. The cofactor is [4Fe-4S] cluster. [2Fe-2S] cluster is required as a cofactor.

It catalyses the reaction (4R,5S)-dethiobiotin + (sulfur carrier)-SH + 2 reduced [2Fe-2S]-[ferredoxin] + 2 S-adenosyl-L-methionine = (sulfur carrier)-H + biotin + 2 5'-deoxyadenosine + 2 L-methionine + 2 oxidized [2Fe-2S]-[ferredoxin]. The protein operates within cofactor biosynthesis; biotin biosynthesis; biotin from 7,8-diaminononanoate: step 2/2. Functionally, catalyzes the conversion of dethiobiotin (DTB) to biotin by the insertion of a sulfur atom into dethiobiotin via a radical-based mechanism. The polypeptide is Biotin synthase (Acinetobacter calcoaceticus).